Reading from the N-terminus, the 306-residue chain is Bifunctional protein FolD 2 (306 aa).

Residues 169–171 (GHS) and isoleucine 235 contribute to the NADP(+) site.

This sequence belongs to the tetrahydrofolate dehydrogenase/cyclohydrolase family. Homodimer.

The catalysed reaction is (6R)-5,10-methylene-5,6,7,8-tetrahydrofolate + NADP(+) = (6R)-5,10-methenyltetrahydrofolate + NADPH. It carries out the reaction (6R)-5,10-methenyltetrahydrofolate + H2O = (6R)-10-formyltetrahydrofolate + H(+). It participates in one-carbon metabolism; tetrahydrofolate interconversion. Catalyzes the oxidation of 5,10-methylenetetrahydrofolate to 5,10-methenyltetrahydrofolate and then the hydrolysis of 5,10-methenyltetrahydrofolate to 10-formyltetrahydrofolate. This Mesorhizobium japonicum (strain LMG 29417 / CECT 9101 / MAFF 303099) (Mesorhizobium loti (strain MAFF 303099)) protein is Bifunctional protein FolD 2.